The following is a 478-amino-acid chain: MKMSIWTPPRLLELAGRSLLRDQALAMSTLEELPTELFPPLFMEAFSRRRCEALKLMVQSWPFRRLPLRPLIKMPCLEAFQAVLDGLDALLNLGVRPRRWKLQVLDLQDVCENFWMVWSEAMAHGCFLNAKRNKKPVEDCPRMKGRQPLTVFVELWLKNRTLDEYLTCLLLWVKQRKDLLHLCCKKLKILGMPFRNIRSILKMVNLDCIQEVEVNCKWVLPILTQFTPYLGHMRNLQKLILSHMDVSRYVSPEQKKEIVTQFTTQFLKLRCLQKLYMNSVSFLEGHLDQLLSCLKTSLKFLTITNCVLLESDLKHLSQCPSISQLKTLDLSGIRLTNYSLVPLQILLEKVAATLEYLDLDDCGIIDSQVNAILPALSRCFELNTFSFCGNPICMATLENLLSHTIILKNLCVELYPAPRESYGADGTLCWSRFAQIRAELMNRVRDLRHPKRILFCTDYCPDCGNRSFYDLEADQYCC.

The LRR 1; degenerate repeat unit spans residues 99 to 126 (RWKLQVLDLQDVCENFWMVWSEAMAHGC). An LRR 2; degenerate repeat occupies 181–205 (HLCCKKLKILGMPFRNIRSILKMVN). Residues 206 to 232 (LDCIQEVEVNCKWVLPILTQFTPYLGH) form an LRR 3; degenerate repeat. The stretch at 233-268 (MRNLQKLILSHMDVSRYVSPEQKKEIVTQFTTQFLK) is one LRR 4; degenerate repeat. LRR repeat units lie at residues 269-294 (LRCL…LSCL), 295-326 (KTSL…SQLK), 327-347 (TLDL…QILL), 351-378 (AATL…ALSR), and 379-403 (CFEL…LLSH).

Belongs to the PRAME family.

The chain is PRAME family member 4 from Homo sapiens (Human).